Reading from the N-terminus, the 187-residue chain is uncharacterized protein (187 aa).

The segment covering glutamate 139–aspartate 168 has biased composition (basic and acidic residues). Positions glutamate 139–glutamate 172 are disordered.

This is an uncharacterized protein from Caenorhabditis elegans.